Consider the following 180-residue polypeptide: Signal peptidase complex subunit 3 (180 aa).

Topologically, residues 1 to 12 (MHNLLSRANALL) are cytoplasmic. A helical; Signal-anchor for type II membrane protein membrane pass occupies residues 13–33 (AFTLWVMAAVTAACFLSTVFL). Residues 34–180 (DYTVPTKLTV…PTTYTTTRRS (147 aa)) lie on the Lumenal side of the membrane. Residue Asn141 is glycosylated (N-linked (GlcNAc...) asparagine).

The protein belongs to the SPCS3 family. Component of the signal peptidase complex (SPC) composed of a catalytic subunit sec-11 and three accessory subunits spcs-1, spcs-2 and spcs-3. The complex induces a local thinning of the ER membrane which is used to measure the length of the signal peptide (SP) h-region of protein substrates. This ensures the selectivity of the complex towards h-regions shorter than 18-20 amino acids.

The protein resides in the endoplasmic reticulum membrane. Its function is as follows. Essential component of the signal peptidase complex (SPC) which catalyzes the cleavage of N-terminal signal sequences from nascent proteins as they are translocated into the lumen of the endoplasmic reticulum. Essential for the SPC catalytic activity, possibly by stabilizing and positioning the active center of the complex close to the lumenal surface. This is Signal peptidase complex subunit 3 from Caenorhabditis elegans.